The chain runs to 280 residues: uncharacterized protein (280 aa).

Positions 1 to 10 (MSSSIKKLKK) are enriched in basic residues. Positions 1–45 (MSSSIKKLKKDTKDTDKTPSKKIYQETHNSEDSEDSEDSDNENNT) are disordered. The span at 11–31 (DTKDTDKTPSKKIYQETHNSE) shows a compositional bias: basic and acidic residues. The span at 32–41 (DSEDSEDSDN) shows a compositional bias: acidic residues.

This is an uncharacterized protein from Acanthamoeba polyphaga mimivirus (APMV).